Here is a 289-residue protein sequence, read N- to C-terminus: Acetyl-coenzyme A carboxylase carboxyl transferase subunit beta 2 (289 aa).

A CoA carboxyltransferase N-terminal domain is found at 25 to 289; that stretch reads VWTKCPSCDQ…TNTSIRLEVK (265 aa). Zn(2+) is bound by residues cysteine 29, cysteine 32, cysteine 48, and cysteine 51. The C4-type zinc-finger motif lies at 29 to 51; that stretch reads CPSCDQVLYRIALKENLEVCPKC.

This sequence belongs to the AccD/PCCB family. Acetyl-CoA carboxylase is a heterohexamer composed of biotin carboxyl carrier protein (AccB), biotin carboxylase (AccC) and two subunits each of ACCase subunit alpha (AccA) and ACCase subunit beta (AccD). Zn(2+) serves as cofactor.

The protein resides in the cytoplasm. The catalysed reaction is N(6)-carboxybiotinyl-L-lysyl-[protein] + acetyl-CoA = N(6)-biotinyl-L-lysyl-[protein] + malonyl-CoA. The protein operates within lipid metabolism; malonyl-CoA biosynthesis; malonyl-CoA from acetyl-CoA: step 1/1. Its function is as follows. Component of the acetyl coenzyme A carboxylase (ACC) complex. Biotin carboxylase (BC) catalyzes the carboxylation of biotin on its carrier protein (BCCP) and then the CO(2) group is transferred by the transcarboxylase to acetyl-CoA to form malonyl-CoA. This chain is Acetyl-coenzyme A carboxylase carboxyl transferase subunit beta 2, found in Vibrio parahaemolyticus serotype O3:K6 (strain RIMD 2210633).